A 396-amino-acid polypeptide reads, in one-letter code: Elongation factor Tu (396 aa).

The tr-type G domain occupies 10 to 206 (KPHVNVGTIG…ALDSYIPTPE (197 aa)). A G1 region spans residues 19–26 (GHVDHGKT). A GTP-binding site is contributed by 19–26 (GHVDHGKT). Thr-26 is a binding site for Mg(2+). A G2 region spans residues 60-64 (GITIN). Positions 81-84 (DCPG) are G3. GTP contacts are provided by residues 81 to 85 (DCPGH) and 136 to 139 (NKCD). Residues 136–139 (NKCD) are G4. Positions 174–176 (SAL) are G5.

This sequence belongs to the TRAFAC class translation factor GTPase superfamily. Classic translation factor GTPase family. EF-Tu/EF-1A subfamily. In terms of assembly, monomer.

Its subcellular location is the cytoplasm. The enzyme catalyses GTP + H2O = GDP + phosphate + H(+). Its function is as follows. GTP hydrolase that promotes the GTP-dependent binding of aminoacyl-tRNA to the A-site of ribosomes during protein biosynthesis. The protein is Elongation factor Tu of Azoarcus sp. (strain BH72).